The following is a 401-amino-acid chain: Tyrosine--tRNA ligase (401 aa).

Positions 45 to 54 (PTAPDLHLGH) match the 'HIGH' region motif. A 'KMSKS' region motif is present at residues 230–234 (KMSKS). Lys-233 lines the ATP pocket. The S4 RNA-binding domain maps to 339 to 399 (IWLAKALVEC…GKRKFAKLKV (61 aa)).

It belongs to the class-I aminoacyl-tRNA synthetase family. TyrS type 2 subfamily. Homodimer.

It is found in the cytoplasm. The enzyme catalyses tRNA(Tyr) + L-tyrosine + ATP = L-tyrosyl-tRNA(Tyr) + AMP + diphosphate + H(+). Functionally, catalyzes the attachment of tyrosine to tRNA(Tyr) in a two-step reaction: tyrosine is first activated by ATP to form Tyr-AMP and then transferred to the acceptor end of tRNA(Tyr). In Campylobacter jejuni (strain RM1221), this protein is Tyrosine--tRNA ligase.